Reading from the N-terminus, the 321-residue chain is Small ribosomal subunit protein mS43 (321 aa).

The transit peptide at methionine 1–tyrosine 13 directs the protein to the mitochondrion.

The protein belongs to the mitochondrion-specific ribosomal protein mS43 family. As to quaternary structure, component of the mitochondrial small ribosomal subunit (mt-SSU). Mature yeast 74S mitochondrial ribosomes consist of a small (37S) and a large (54S) subunit. The 37S small subunit contains a 15S ribosomal RNA (15S mt-rRNA) and 34 different proteins. The 54S large subunit contains a 21S rRNA (21S mt-rRNA) and 46 different proteins. mS43 forms a heterodimer with mS42, building a large protuberance adjacent to the mRNA channel exit in the mt-SSU body.

Its subcellular location is the mitochondrion. Component of the mitochondrial ribosome (mitoribosome), a dedicated translation machinery responsible for the synthesis of mitochondrial genome-encoded proteins, including at least some of the essential transmembrane subunits of the mitochondrial respiratory chain. The mitoribosomes are attached to the mitochondrial inner membrane and translation products are cotranslationally integrated into the membrane. In Saccharomyces cerevisiae (strain ATCC 204508 / S288c) (Baker's yeast), this protein is Small ribosomal subunit protein mS43 (MRP1).